The chain runs to 144 residues: Short-chain diamines transporter (144 aa).

4 helical membrane-spanning segments follow: residues 9 to 29 (IHAI…LSFI), 35 to 55 (EVTG…NMIF), 76 to 96 (ILHA…MIAY), and 103 to 123 (IDAF…TFIF).

The protein belongs to the proteobacterial antimicrobial compound efflux (PACE) (TC 2.A.117) family. Exists in a monomer-homodimer equilibrium. The dimer is probably the functional form of the protein, and the assembly of the dimer is mediated by binding of chlorhexidine and promoted by high pH conditions.

It is found in the cell inner membrane. With respect to regulation, protonation/deprotonation of Glu-15 may play an important role in transporter function. Cadaverin transport is inhibited in the presence of CCCP. Functionally, mediates the efflux of short-chain diamines when energized by an electrochemical gradient. Recognizes specifically the short-chain diamines cadaverine and putrescine as substrates, and promotes the active transport of these substrates in exchange for a cation. Protons are probably the primary source of energy for transport, however it was not possible to conclude with complete certainty that protons, rather than alternative cations such as Na(+) ions, are exchanged for substrates by AceI. In addition, is involved in resistance to the synthetic biocide chlorhexidine, a widely used antiseptic and disinfectant in both hospital and community settings. Interacts directly with chlorhexidine and mediates its efflux via an energy-dependent mechanism. This chain is Short-chain diamines transporter, found in Acinetobacter baumannii (strain ATCC 17978 / DSM 105126 / CIP 53.77 / LMG 1025 / NCDC KC755 / 5377).